We begin with the raw amino-acid sequence, 116 residues long: Ig heavy chain V region 3-6 (116 aa).

The first 18 residues, 1–18 (MKVLSLLYLLTAIPGILS), serve as a signal peptide directing secretion. Residues 19–48 (DVQLQESGPGLVKPSQSLSLTCSVTGYSIT) are framework-1. A disulfide bond links C40 and C114. The segment at 49-53 (SGYYW) is complementarity-determining-1. Residues 54–67 (NWIRQFPGNKLEWM) form a framework-2 region. Residues 68–84 (GYISYDGSNNYNPSLKN) form a complementarity-determining-2 region. Residues 85 to 116 (RISITRDTSKNQFFLKLNSVTTEDTATYYCAR) form a framework-3 region.

This Mus musculus (Mouse) protein is Ig heavy chain V region 3-6 (Ighv3-6).